A 554-amino-acid polypeptide reads, in one-letter code: Heterochromatin protein 1-binding protein 3 (554 aa).

A2 carries the post-translational modification N-acetylalanine. At S6 the chain carries Phosphoserine. Disordered regions lie at residues 30–136 (LGEK…KTIP) and 142–161 (SASQLARAQRQTPMASSPRP). At T51 the chain carries Phosphothreonine. Over residues 60-71 (GEEEKPEPDGSS) the composition is skewed to acidic residues. A Glycyl lysine isopeptide (Lys-Gly) (interchain with G-Cter in SUMO2) cross-link involves residue K64. Phosphothreonine is present on residues E72 and T85. Residues 72-93 (EESISTVEEQENETPPATSSEA) are compositionally biased toward polar residues. The span at 94-129 (EQPKGEPESGEKEENNNKSAEEPKKDEKDQSKEKEK) shows a compositional bias: basic and acidic residues. A Glycyl lysine isopeptide (Lys-Gly) (interchain with G-Cter in SUMO2) cross-link involves residue K97. Residues 142-156 (SASQLARAQRQTPMA) show a composition bias toward polar residues. Phosphoserine occurs at positions 144, 157, and 158. Positions 159-234 (PRPKMDAILT…GASGSFVVVQ (76 aa)) constitute an H15 1 domain. K192 is modified (N6-acetyllysine). The disordered stretch occupies residues 229 to 254 (SFVVVQKSKPPQKSKNRKKGSALDPE). The segment covering 238-248 (PPQKSKNRKKG) has biased composition (basic residues). Position 249 is a phosphoserine (S249). The short motif at 255-259 (PQVKL) is the PxVxL motif element. H15 domains are found at residues 255–330 (PQVK…QLKK) and 337–413 (LGGS…QLSF). K258 is covalently cross-linked (Glycyl lysine isopeptide (Lys-Gly) (interchain with G-Cter in SUMO2)). The interval 420–554 (GVLFPKKESG…AMKKSFKTKK (135 aa)) is disordered. Residues 430 to 451 (GSDDEDEDDDDDESSEDSEDEE) are compositionally biased toward acidic residues. 3 positions are modified to phosphoserine: S443, S444, and S447. A compositionally biased stretch (polar residues) spans 464 to 475 (AKSQGKTASMKQ). Basic residues-rich tracts occupy residues 490–511 (GKVRPLPKKAPPKAKTPARKAR) and 544–554 (SAMKKSFKTKK).

In terms of assembly, interacts (via PxVxL motif) with CBX5 (via Trp-174).

The protein localises to the nucleus. It localises to the chromosome. Its function is as follows. Component of heterochromatin that maintains heterochromatin integrity during G1/S progression and regulates the duration of G1 phase to critically influence cell proliferative capacity. May play a role in hypoxia-induced oncogenesis. This chain is Heterochromatin protein 1-binding protein 3 (Hp1bp3), found in Mus musculus (Mouse).